The primary structure comprises 234 residues: Purine nucleoside phosphorylase DeoD-type (234 aa).

His-4 contributes to the a purine D-ribonucleoside binding site. Residues Gly-20, Arg-24, Arg-43, and 87–90 each bind phosphate; that span reads RIGS. A purine D-ribonucleoside-binding positions include 179-181 and 203-204; these read DME and SD. Asp-204 functions as the Proton donor in the catalytic mechanism.

It belongs to the PNP/UDP phosphorylase family. In terms of assembly, homohexamer; trimer of homodimers.

The catalysed reaction is a purine D-ribonucleoside + phosphate = a purine nucleobase + alpha-D-ribose 1-phosphate. The enzyme catalyses a purine 2'-deoxy-D-ribonucleoside + phosphate = a purine nucleobase + 2-deoxy-alpha-D-ribose 1-phosphate. Its function is as follows. Catalyzes the reversible phosphorolytic breakdown of the N-glycosidic bond in the beta-(deoxy)ribonucleoside molecules, with the formation of the corresponding free purine bases and pentose-1-phosphate. This chain is Purine nucleoside phosphorylase DeoD-type, found in Shewanella oneidensis (strain ATCC 700550 / JCM 31522 / CIP 106686 / LMG 19005 / NCIMB 14063 / MR-1).